The sequence spans 111 residues: Probable 4-amino-4-deoxy-L-arabinose-phosphoundecaprenol flippase subunit ArnE (111 aa).

A run of 3 helical transmembrane segments spans residues 38–58 (LWLG…LLVL), 61–81 (LPVG…TLAA), and 91–111 (PRHW…GSAA). An EamA domain is found at 40 to 109 (LGLALICMGA…IISGIIILGS (70 aa)).

The protein belongs to the ArnE family. Heterodimer of ArnE and ArnF.

The protein resides in the cell inner membrane. It participates in bacterial outer membrane biogenesis; lipopolysaccharide biosynthesis. Translocates 4-amino-4-deoxy-L-arabinose-phosphoundecaprenol (alpha-L-Ara4N-phosphoundecaprenol) from the cytoplasmic to the periplasmic side of the inner membrane. The chain is Probable 4-amino-4-deoxy-L-arabinose-phosphoundecaprenol flippase subunit ArnE from Salmonella heidelberg (strain SL476).